The sequence spans 309 residues: Formamidopyrimidine-DNA glycosylase (309 aa).

Proline 2 (schiff-base intermediate with DNA) is an active-site residue. Residue glutamate 3 is the Proton donor of the active site. Catalysis depends on lysine 56, which acts as the Proton donor; for beta-elimination activity. DNA-binding residues include histidine 106 and arginine 129. The FPG-type zinc-finger motif lies at 271-305; the sequence is NVYGRQGNACPHCESTLENIKLNGRASVYCPLCQP. Arginine 295 functions as the Proton donor; for delta-elimination activity in the catalytic mechanism.

Belongs to the FPG family. In terms of assembly, monomer. Requires Zn(2+) as cofactor.

It carries out the reaction Hydrolysis of DNA containing ring-opened 7-methylguanine residues, releasing 2,6-diamino-4-hydroxy-5-(N-methyl)formamidopyrimidine.. The catalysed reaction is 2'-deoxyribonucleotide-(2'-deoxyribose 5'-phosphate)-2'-deoxyribonucleotide-DNA = a 3'-end 2'-deoxyribonucleotide-(2,3-dehydro-2,3-deoxyribose 5'-phosphate)-DNA + a 5'-end 5'-phospho-2'-deoxyribonucleoside-DNA + H(+). Its function is as follows. Involved in base excision repair of DNA damaged by oxidation or by mutagenic agents. Acts as a DNA glycosylase that recognizes and removes damaged bases. Has a preference for oxidized purines, such as 7,8-dihydro-8-oxoguanine (8-oxoG). Has AP (apurinic/apyrimidinic) lyase activity and introduces nicks in the DNA strand. Cleaves the DNA backbone by beta-delta elimination to generate a single-strand break at the site of the removed base with both 3'- and 5'-phosphates. This Psychrobacter arcticus (strain DSM 17307 / VKM B-2377 / 273-4) protein is Formamidopyrimidine-DNA glycosylase.